We begin with the raw amino-acid sequence, 555 residues long: Glutamine--tRNA ligase (555 aa).

Positions 34 to 44 match the 'HIGH' region motif; sequence PEPNGYLHIGH. ATP contacts are provided by residues 35 to 37 and 41 to 47; these read EPN and HIGHAKS. L-glutamine is bound by residues Asp67 and Tyr212. ATP is bound by residues Thr231, 261–262, and 269–271; these read RL and MSK. Positions 268-272 match the 'KMSKS' region motif; that stretch reads VMSKR. Residues 317-324 form an interaction with tRNA region; that stretch reads TKQDNTIE.

This sequence belongs to the class-I aminoacyl-tRNA synthetase family. Monomer.

It is found in the cytoplasm. The enzyme catalyses tRNA(Gln) + L-glutamine + ATP = L-glutaminyl-tRNA(Gln) + AMP + diphosphate. This chain is Glutamine--tRNA ligase, found in Salmonella schwarzengrund (strain CVM19633).